We begin with the raw amino-acid sequence, 314 residues long: Serine hydrolase-like protein 2 (314 aa).

In terms of domain architecture, AB hydrolase-1 spans 33-293 (PPVLCLHGWL…GNHCVHMSEP (261 aa)). Ser-108 is an active-site residue.

Belongs to the AB hydrolase superfamily.

The protein resides in the cytoplasm. The protein localises to the perinuclear region. Its subcellular location is the peroxisome. Functionally, probable serine hydrolase. May be related to cell muscle hypertrophy. This is Serine hydrolase-like protein 2 (SERHL2) from Homo sapiens (Human).